Consider the following 322-residue polypeptide: N-acetyl-gamma-glutamyl-phosphate reductase (322 aa).

Residue cysteine 132 is part of the active site.

This sequence belongs to the NAGSA dehydrogenase family. Type 1 subfamily.

It is found in the cytoplasm. It catalyses the reaction N-acetyl-L-glutamate 5-semialdehyde + phosphate + NADP(+) = N-acetyl-L-glutamyl 5-phosphate + NADPH + H(+). It functions in the pathway amino-acid biosynthesis; L-arginine biosynthesis; N(2)-acetyl-L-ornithine from L-glutamate: step 3/4. Its function is as follows. Catalyzes the NADPH-dependent reduction of N-acetyl-5-glutamyl phosphate to yield N-acetyl-L-glutamate 5-semialdehyde. This Phocaeicola vulgatus (strain ATCC 8482 / DSM 1447 / JCM 5826 / CCUG 4940 / NBRC 14291 / NCTC 11154) (Bacteroides vulgatus) protein is N-acetyl-gamma-glutamyl-phosphate reductase.